A 230-amino-acid chain; its full sequence is CRP-like protein Clp (230 aa).

18 to 139 is an a nucleoside 3',5'-cyclic phosphate binding site; it reads PSLALDAGTI…APKILYAIGV (122 aa). The 73-residue stretch at 158–230 folds into the HTH crp-type domain; sequence LDVTDRIVRT…GKTVVLYGTR (73 aa). Residues 190–209 constitute a DNA-binding region (H-T-H motif); the sequence is RQELARLVGCSREMAGRVLK.

In terms of assembly, homodimer.

The protein resides in the cytoplasm. Its activity is regulated as follows. Allosterically inhibited by cyclic di-GMP (c-di-GMP), which binds to Clp and abolishes its ability to bind its target gene promoter. Its function is as follows. Global transcriptional regulator that regulates virulence factors production by activating or repressing the expression of a large set of genes in diffusible signal factor (DSF) pathway. The sequence is that of CRP-like protein Clp (clp) from Xanthomonas axonopodis pv. citri (strain 306).